Consider the following 358-residue polypeptide: MAVKWTGGHSSSILCLNANKDGLVASGGEGGDLVAWGEDGTPLGHMQLEGADDVTSVLFSASCPTKLYASHGETISVLDVRSLKGSLDHFHVNEEEINCLSLNETESLLASADDSGAIKILDLEKKKVTRSLKRHSNICSSVAFRPQRPQSLVSCGLDMQVMLWSLQKARPVWITNLQEDETEETEGPQTPGRLLNPALAHSVSVASCGNIFSCGAEDGKVRIFRVMGVKCERELGFKGHTLGVSQVCFLPESSLLLTGGNDGRIRLWDVSGKMEKLQKSPARHIHRKKAKRAACPTQGGNSRAPGAEDEGHAKILPKLDIEHGEKVNWLLSTKIKGNKSILVADQTSCVSVYPLNEL.

5 WD repeats span residues 8–47, 92–131, 134–174, 195–234, and 239–278; these read GHSSSILCLNANKDGLVASGGEGGDLVAWGEDGTPLGHMQ, VNEEEINCLSLNETESLLASADDSGAIKILDLEKKKVTRS, RHSN…PVWI, LNPALAHSVSVASCGNIFSCGAEDGKVRIFRVMGVKCERE, and GHTLGVSQVCFLPESSLLLTGGNDGRIRLWDVSGKMEKLQ. The interval 288–309 is disordered; sequence KKAKRAACPTQGGNSRAPGAED.

Belongs to the WD repeat WDR53 family.

This Mus musculus (Mouse) protein is WD repeat-containing protein 53 (Wdr53).